Here is a 621-residue protein sequence, read N- to C-terminus: Amino-acid acetyltransferase, mitochondrial (621 aa).

Residues 1–77 (MIPRAPPSTQ…RSYLASFGVQ (77 aa)) constitute a mitochondrion transit peptide. The interval 213 to 233 (PKPGSEEESEPGFSPPETHIY) is disordered. Residues 424-600 (LPIRVVRSVS…GSAGLSFIED (177 aa)) form the N-acetyltransferase domain.

This sequence belongs to the acetyltransferase family.

Its subcellular location is the mitochondrion. It catalyses the reaction L-glutamate + acetyl-CoA = N-acetyl-L-glutamate + CoA + H(+). It participates in amino-acid biosynthesis; L-arginine biosynthesis; N(2)-acetyl-L-ornithine from L-glutamate: step 1/4. In terms of biological role, N-acetylglutamate synthase involved in arginine biosynthesis. In Coprinopsis cinerea (strain Okayama-7 / 130 / ATCC MYA-4618 / FGSC 9003) (Inky cap fungus), this protein is Amino-acid acetyltransferase, mitochondrial (ARG2).